A 159-amino-acid polypeptide reads, in one-letter code: Ascorbate-specific PTS system EIIA component (159 aa).

Positions valine 9–valine 152 constitute a PTS EIIA type-2 domain. Histidine 71 functions as the Tele-phosphohistidine intermediate in the catalytic mechanism. Histidine 71 bears the Phosphohistidine mark.

Its subcellular location is the cytoplasm. The phosphoenolpyruvate-dependent sugar phosphotransferase system (sugar PTS), a major carbohydrate active transport system, catalyzes the phosphorylation of incoming sugar substrates concomitantly with their translocation across the cell membrane. The enzyme II UlaABC PTS system is involved in ascorbate transport. In Mycoplasma pneumoniae (strain ATCC 29342 / M129 / Subtype 1) (Mycoplasmoides pneumoniae), this protein is Ascorbate-specific PTS system EIIA component (ulaC).